Reading from the N-terminus, the 380-residue chain is Cytochrome b (380 aa).

4 helical membrane passes run 33–53 (FGSL…FLAM), 77–98 (WMIR…FLHI), 113–133 (WNIG…GYVL), and 178–198 (FFTL…LHLL). Heme b contacts are provided by histidine 83 and histidine 97. The heme b site is built by histidine 182 and histidine 196. Histidine 201 serves as a coordination point for a ubiquinone. A run of 4 helical transmembrane segments spans residues 226-246 (IKDI…TLLS), 288-308 (LGGV…PALH), 320-340 (LSQF…WIGG), and 347-367 (FITI…LLMP).

This sequence belongs to the cytochrome b family. The cytochrome bc1 complex contains 11 subunits: 3 respiratory subunits (MT-CYB, CYC1 and UQCRFS1), 2 core proteins (UQCRC1 and UQCRC2) and 6 low-molecular weight proteins (UQCRH/QCR6, UQCRB/QCR7, UQCRQ/QCR8, UQCR10/QCR9, UQCR11/QCR10 and a cleavage product of UQCRFS1). This cytochrome bc1 complex then forms a dimer. The cofactor is heme b.

The protein resides in the mitochondrion inner membrane. Its function is as follows. Component of the ubiquinol-cytochrome c reductase complex (complex III or cytochrome b-c1 complex) that is part of the mitochondrial respiratory chain. The b-c1 complex mediates electron transfer from ubiquinol to cytochrome c. Contributes to the generation of a proton gradient across the mitochondrial membrane that is then used for ATP synthesis. In Pongo abelii (Sumatran orangutan), this protein is Cytochrome b (MT-CYB).